The sequence spans 264 residues: Thymidylate synthase (264 aa).

DUMP is bound at residue Arg-21. His-51 contacts (6R)-5,10-methylene-5,6,7,8-tetrahydrofolate. Residue 126-127 (RR) coordinates dUMP. Cys-146 (nucleophile) is an active-site residue. Residues 166–169 (RSAD), Asn-177, and 207–209 (HLY) contribute to the dUMP site. Asp-169 provides a ligand contact to (6R)-5,10-methylene-5,6,7,8-tetrahydrofolate. Ala-263 contacts (6R)-5,10-methylene-5,6,7,8-tetrahydrofolate.

The protein belongs to the thymidylate synthase family. Bacterial-type ThyA subfamily. Homodimer.

It is found in the cytoplasm. The catalysed reaction is dUMP + (6R)-5,10-methylene-5,6,7,8-tetrahydrofolate = 7,8-dihydrofolate + dTMP. It functions in the pathway pyrimidine metabolism; dTTP biosynthesis. In terms of biological role, catalyzes the reductive methylation of 2'-deoxyuridine-5'-monophosphate (dUMP) to 2'-deoxythymidine-5'-monophosphate (dTMP) while utilizing 5,10-methylenetetrahydrofolate (mTHF) as the methyl donor and reductant in the reaction, yielding dihydrofolate (DHF) as a by-product. This enzymatic reaction provides an intracellular de novo source of dTMP, an essential precursor for DNA biosynthesis. This Rhodopirellula baltica (strain DSM 10527 / NCIMB 13988 / SH1) protein is Thymidylate synthase.